A 315-amino-acid chain; its full sequence is Porphobilinogen deaminase (315 aa).

C251 is modified (S-(dipyrrolylmethanemethyl)cysteine).

This sequence belongs to the HMBS family. As to quaternary structure, monomer. Requires dipyrromethane as cofactor.

It carries out the reaction 4 porphobilinogen + H2O = hydroxymethylbilane + 4 NH4(+). It functions in the pathway porphyrin-containing compound metabolism; protoporphyrin-IX biosynthesis; coproporphyrinogen-III from 5-aminolevulinate: step 2/4. Tetrapolymerization of the monopyrrole PBG into the hydroxymethylbilane pre-uroporphyrinogen in several discrete steps. In Sphingopyxis alaskensis (strain DSM 13593 / LMG 18877 / RB2256) (Sphingomonas alaskensis), this protein is Porphobilinogen deaminase.